A 460-amino-acid polypeptide reads, in one-letter code: Cyclin-A1-1 (460 aa).

Disordered stretches follow at residues 1–52 (MSNI…ITNQ) and 95–126 (PHKVASSPSKSDDGSVSMDETRSSSDSYKSPQ). Composition is skewed to low complexity over residues 10-19 (SSFSSSTKSS) and 100-111 (SSPSKSDDGSVS).

The protein belongs to the cyclin family. Cyclin AB subfamily. Interacts with FZR2/CCS52A1, FZR1/CCS52A2 and FZR3/CCS52B.

The polypeptide is Cyclin-A1-1 (CYCA1-1) (Arabidopsis thaliana (Mouse-ear cress)).